A 73-amino-acid polypeptide reads, in one-letter code: Beta-1 adrenergic receptor (73 aa).

Residues 1–12 (ISALVSFLPILM) form a helical membrane-spanning segment. The Extracellular segment spans residues 13 to 38 (HWWRAENDEARRCYNDPKCCDFVTNR). Cysteines 25 and 31 form a disulfide. Residues 39–64 (AYAIASSVVSFYVPLCIMAFVYLRVF) traverse the membrane as a helical segment. S44 contributes to the cyanopindolol binding site. Topologically, residues 65-73 (REAQKQVKK) are cytoplasmic.

Belongs to the G-protein coupled receptor 1 family. Adrenergic receptor subfamily. ADRB1 sub-subfamily. As to quaternary structure, interacts (via C-terminus PDZ motif) with RAPGEF2; the interaction is direct. Interacts with GOPC, MAGI3 and DLG4. Homologous desensitization of the receptor is mediated by its phosphorylation by beta-adrenergic receptor kinase.

The protein localises to the cell membrane. It is found in the early endosome. In terms of biological role, beta-adrenergic receptors mediate the catecholamine-induced activation of adenylate cyclase through the action of G proteins. This receptor binds epinephrine and norepinephrine with approximately equal affinity. Mediates Ras activation through G(s)-alpha- and cAMP-mediated signaling. In dorsal pons neurons, involved in the regulation of sleep/wake behaviors. The chain is Beta-1 adrenergic receptor (ADRB1) from Meriones unguiculatus (Mongolian jird).